Here is a 227-residue protein sequence, read N- to C-terminus: Urease accessory protein UreF (227 aa).

The protein belongs to the UreF family. In terms of assembly, ureD, UreF and UreG form a complex that acts as a GTP-hydrolysis-dependent molecular chaperone, activating the urease apoprotein by helping to assemble the nickel containing metallocenter of UreC. The UreE protein probably delivers the nickel.

Its subcellular location is the cytoplasm. Required for maturation of urease via the functional incorporation of the urease nickel metallocenter. The protein is Urease accessory protein UreF of Actinobacillus pleuropneumoniae serotype 5b (strain L20).